Consider the following 273-residue polypeptide: MSFVFRGSRGDLESGFSGGFLPERRAMRVHGARPVNSNSLAFLVTVLLLFMILNSHQMPPNFLLWLVLGVFLMATTLRMYATCQQLQAHAQAQAAAASGLFSHTELRLHVPPSIALATRGRLQGLRLQLALLDREFDDLDYETLRALDSDNVSTTSMSEEEINALPVHKYKVLDPENGCSLAKQASTSSSAEKMLDSANESKKGTEDELTCSVCLEQVTVGEIVRTLPCLHQFHAGCIDPWLRQQGTCPVCKFRAHSGWQEQDEIDDDASDMV.

The Cytoplasmic portion of the chain corresponds to 1-33 (MSFVFRGSRGDLESGFSGGFLPERRAMRVHGAR). Residues 34-54 (PVNSNSLAFLVTVLLLFMILN) traverse the membrane as a helical segment. The Lumenal segment spans residues 55–56 (SH). The chain crosses the membrane as a helical span at residues 57–77 (QMPPNFLLWLVLGVFLMATTL). Residues 78-273 (RMYATCQQLQ…EIDDDASDMV (196 aa)) are Cytoplasmic-facing. Residues 211 to 252 (CSVCLEQVTVGEIVRTLPCLHQFHAGCIDPWLRQQGTCPVCK) form an RING-type; atypical zinc finger.

In terms of assembly, interacts with ATP1/SDIRIP1. In terms of tissue distribution, ubiquitous.

The protein resides in the endoplasmic reticulum membrane. It carries out the reaction S-ubiquitinyl-[E2 ubiquitin-conjugating enzyme]-L-cysteine + [acceptor protein]-L-lysine = [E2 ubiquitin-conjugating enzyme]-L-cysteine + N(6)-ubiquitinyl-[acceptor protein]-L-lysine.. Functionally, E3 ubiquitin-protein ligase that acts as a positive regulator of abscisic acid-related stress signal transduction. Interacts with and ubiquitinates ATP1/SDIRIP1 to modulate ATP1/SDIRIP1 stability through the 26S proteasome pathway. Regulates abscisic acid (ABA) and salt stress responses by negatively affecting ATP1/SDIRIP1 stability. The SDIR1-ATP1/SDIRIP1 complex plays an important role in ABA signaling through the ubiquitination pathway. The sequence is that of E3 ubiquitin-protein ligase SDIR1 from Arabidopsis thaliana (Mouse-ear cress).